We begin with the raw amino-acid sequence, 317 residues long: Ribose-phosphate pyrophosphokinase A (317 aa).

Residues Asp130, His132, and Asp145 each contribute to the Mg(2+) site. The binding of phosphoribosylpyrophosphate stretch occupies residues 212–227 (KDKVALIVDDMADTCG).

Belongs to the ribose-phosphate pyrophosphokinase family. The cofactor is Mg(2+).

The catalysed reaction is D-ribose 5-phosphate + ATP = 5-phospho-alpha-D-ribose 1-diphosphate + AMP + H(+). The protein operates within metabolic intermediate biosynthesis; 5-phospho-alpha-D-ribose 1-diphosphate biosynthesis; 5-phospho-alpha-D-ribose 1-diphosphate from D-ribose 5-phosphate (route I): step 1/1. This Dictyostelium discoideum (Social amoeba) protein is Ribose-phosphate pyrophosphokinase A (prsA).